The primary structure comprises 38 residues: Tyrosinase inhibitor (38 aa).

3 disulfide bridges follow: Cys11-Cys25, Cys18-Cys29, and Cys24-Cys36. Tyr32 carries the 3',4'-dihydroxyphenylalanine modification.

Monomer. Post-translationally, contains L-DOPA (3',4'-dihydroxyphenylalanine).

It localises to the secreted. Its function is as follows. Potent reversible, competitive inhibitor of tyrosinase (phenol oxidase) in the nanomolar range. The protein is Tyrosinase inhibitor of Musca domestica (House fly).